The following is a 358-amino-acid chain: Putative inhibitor of apoptosis (358 aa).

BIR repeat units follow at residues 4-70 (EKDR…CPFL) and 90-157 (YAAR…CEYL). The Zn(2+) site is built by cysteine 127, cysteine 130, histidine 147, and cysteine 154. The 91-residue stretch at 193-283 (EPPNDLSLIR…MLYKHLFVQQ (91 aa)) folds into the CARD domain. Residues 311–346 (CKVCMDKEVSIVFIPCGHLVVCKDCAPSLRKCPICR) form an RING-type zinc finger.

The protein belongs to the IAP family.

This is Putative inhibitor of apoptosis (PIAP) from Sus scrofa (Pig).